The chain runs to 142 residues: RNA-directed DNA polymerase homolog (142 aa).

The protein localises to the mitochondrion. The catalysed reaction is RNA(n) + a ribonucleoside 5'-triphosphate = RNA(n+1) + diphosphate. This chain is RNA-directed DNA polymerase homolog, found in Oenothera berteroana (Bertero's evening primrose).